Reading from the N-terminus, the 140-residue chain is ATP synthase epsilon chain, chloroplastic (140 aa).

It belongs to the ATPase epsilon chain family. In terms of assembly, F-type ATPases have 2 components, CF(1) - the catalytic core - and CF(0) - the membrane proton channel. CF(1) has five subunits: alpha(3), beta(3), gamma(1), delta(1), epsilon(1). CF(0) has three main subunits: a, b and c.

It is found in the plastid. Its subcellular location is the chloroplast thylakoid membrane. Functionally, produces ATP from ADP in the presence of a proton gradient across the membrane. This chain is ATP synthase epsilon chain, chloroplastic, found in Panax ginseng (Korean ginseng).